The primary structure comprises 145 residues: D-aminoacyl-tRNA deacylase (145 aa).

The Gly-cisPro motif, important for rejection of L-amino acids motif lies at 137–138 (GP).

It belongs to the DTD family. Homodimer.

It localises to the cytoplasm. The catalysed reaction is glycyl-tRNA(Ala) + H2O = tRNA(Ala) + glycine + H(+). It catalyses the reaction a D-aminoacyl-tRNA + H2O = a tRNA + a D-alpha-amino acid + H(+). An aminoacyl-tRNA editing enzyme that deacylates mischarged D-aminoacyl-tRNAs. Also deacylates mischarged glycyl-tRNA(Ala), protecting cells against glycine mischarging by AlaRS. Acts via tRNA-based rather than protein-based catalysis; rejects L-amino acids rather than detecting D-amino acids in the active site. By recycling D-aminoacyl-tRNA to D-amino acids and free tRNA molecules, this enzyme counteracts the toxicity associated with the formation of D-aminoacyl-tRNA entities in vivo and helps enforce protein L-homochirality. The chain is D-aminoacyl-tRNA deacylase from Alcanivorax borkumensis (strain ATCC 700651 / DSM 11573 / NCIMB 13689 / SK2).